The sequence spans 201 residues: Recombination protein RecR (201 aa).

The C4-type zinc finger occupies Cys60–Cys75. Residues Ser83–Pro178 enclose the Toprim domain.

The protein belongs to the RecR family.

Its function is as follows. May play a role in DNA repair. It seems to be involved in an RecBC-independent recombinational process of DNA repair. It may act with RecF and RecO. The chain is Recombination protein RecR from Agrobacterium fabrum (strain C58 / ATCC 33970) (Agrobacterium tumefaciens (strain C58)).